Here is a 236-residue protein sequence, read N- to C-terminus: Small ribosomal subunit protein uS2c (236 aa).

This sequence belongs to the universal ribosomal protein uS2 family.

The protein localises to the plastid. Its subcellular location is the chloroplast. This Chaetosphaeridium globosum (Charophycean green alga) protein is Small ribosomal subunit protein uS2c (rps2).